Reading from the N-terminus, the 796-residue chain is Kinesin-like protein KIF3C (796 aa).

The region spanning 10 to 367 is the Kinesin motor domain; that stretch reads ALKVVARCRP…LRFANRAKNI (358 aa). An ATP-binding site is contributed by 97–104; it reads GQTGTGKT. 3 disordered regions span residues 251–292, 397–421, and 754–796; these read ERQN…PKEA, EKKG…SAPA, and PSTS…VDHD. Over residues 270-284 the composition is skewed to gly residues; sequence AGGGGGGGGTSGSGS. Residues 378–632 are a coiled coil; that stretch reads KDTLLREFQE…NEQTRELKLK (255 aa). Positions 401-416 are enriched in basic residues; the sequence is MLGKRPRRKSSRRKKA. The tract at residues 633 to 793 is globular; sequence YLIIENFIPP…SAPLHPATVV (161 aa).

The protein belongs to the TRAFAC class myosin-kinesin ATPase superfamily. Kinesin family. Kinesin II subfamily. As to quaternary structure, heterodimer of KIF3A and KIF3C.

It is found in the cytoplasm. It localises to the cytoskeleton. Its function is as follows. Microtubule-based anterograde translocator for membranous organelles. In Rattus norvegicus (Rat), this protein is Kinesin-like protein KIF3C (Kif3c).